The sequence spans 810 residues: Plasminogen (810 aa).

An N-terminal signal peptide occupies residues 1 to 19; it reads MQRKELVLLFLLFLQPGHG. Residues 20–98 enclose the PAN domain; that stretch reads IPLDDYVTTQ…RDVILFEKKM (79 aa). Cystine bridges form between C49-C73, C53-C61, C103-C181, C124-C164, C152-C176, C185-C262, C188-C316, C206-C245, C234-C257, C275-C352, C296-C335, C324-C347, C379-C456, C400-C439, C428-C451, C482-C561, C503-C544, C532-C556, C569-C685, C579-C586, C607-C623, C699-C766, C729-C745, and C756-C784. Kringle domains follow at residues 103-181, 185-262, 275-352, 379-456, and 482-561; these read CKVG…IIQC, CMHC…IPRC, CLMG…IPDC, CYQG…LKKC, and CIID…IPHC. The N-linked (GlcNAc...) asparagine glycan is linked to N339. The interval 398-418 is disordered; sequence KKCQPWTSMRPHRHSKTPENY. The Peptidase S1 domain occupies 582–808; the sequence is RVGGCVAHPH…YVSWLQDVMR (227 aa). A Phosphoserine modification is found at S598. Catalysis depends on charge relay system residues H622 and D665. Catalysis depends on S760, which acts as the Charge relay system.

Belongs to the peptidase S1 family. Plasminogen subfamily. Interacts with CSPG4 and AMOT. Interacts (via the Kringle domains) with HRG; the interaction tethers PLG to the cell surface and enhances its activation. Interacts (via Kringle 4 domain) with ADA; the interaction stimulates PLG activation when in complex with DPP4. Angiostatin: Interacts with ATP5F1A; the interaction inhibits most of the angiogenic effects of angiostatin. In terms of processing, in the presence of the inhibitor, the activation involves only cleavage after Arg-582, yielding two chains held together by two disulfide bonds. In the absence of the inhibitor, the activation involves additionally the removal of the activation peptide.

It is found in the secreted. It catalyses the reaction Preferential cleavage: Lys-|-Xaa &gt; Arg-|-Xaa, higher selectivity than trypsin. Converts fibrin into soluble products.. Converted into plasmin by plasminogen activators, both plasminogen and its activator being bound to fibrin. Cannot be activated with streptokinase. Functionally, plasmin dissolves the fibrin of blood clots and acts as a proteolytic factor in a variety of other processes including embryonic development, tissue remodeling, tumor invasion, and inflammation. In ovulation, weakens the walls of the Graafian follicle. It activates the urokinase-type plasminogen activator, collagenases and several complement zymogens, such as C1, C4 and C5. Cleavage of fibronectin and laminin leads to cell detachment and apoptosis. Also cleaves fibrin, thrombospondin and von Willebrand factor. Its role in tissue remodeling and tumor invasion may be modulated by CSPG4. Binds to cells. The sequence is that of Plasminogen (PLG) from Erinaceus europaeus (Western European hedgehog).